The primary structure comprises 380 residues: MKNISLLGASGSIGTQTLDVLRSHPDQFRLVAFSVGKNIDYAVKVIQEFSPQIVSVQREEDVLKLQAVSGNTKIVYGSEGLLEVALHPDAEIVVNAVVGSVGLLPTLRAIEAKKTIGIANKETLVTAGHLVMEAARKHNVSLLPVDSEHSAIFQCLNGENEKRISRLIITASGGSFRDKTRDELHHVTVEDALRHPNWSMGSKITIDSATMMNKGLEVIEAHWLFGIPYEQIDVVLHKESIIHSMVEFEDRSVMAQLGSPDMRVPIQYALTYPDRLPLSDTKQLNLWEIGTLHFEKMNQERFRCLRFAYEAGKAGGSMPAVMNAANEVAVEAFLQKRIGFLTVEDLIEKAMNHHNVIARPSLEEILEIDAATRRFVMEQI.

S10, G11, S12, I13, G36, K37, N38, and N120 together coordinate NADPH. K121 contributes to the 1-deoxy-D-xylulose 5-phosphate binding site. E122 lines the NADPH pocket. D146 is a Mn(2+) binding site. The 1-deoxy-D-xylulose 5-phosphate site is built by S147, E148, S172, and H195. Residue E148 participates in Mn(2+) binding. G201 contacts NADPH. 1-deoxy-D-xylulose 5-phosphate-binding residues include S208, N213, K214, and E217. E217 contacts Mn(2+).

This sequence belongs to the DXR family. Mg(2+) is required as a cofactor. Requires Mn(2+) as cofactor.

It catalyses the reaction 2-C-methyl-D-erythritol 4-phosphate + NADP(+) = 1-deoxy-D-xylulose 5-phosphate + NADPH + H(+). Its pathway is isoprenoid biosynthesis; isopentenyl diphosphate biosynthesis via DXP pathway; isopentenyl diphosphate from 1-deoxy-D-xylulose 5-phosphate: step 1/6. In terms of biological role, catalyzes the NADPH-dependent rearrangement and reduction of 1-deoxy-D-xylulose-5-phosphate (DXP) to 2-C-methyl-D-erythritol 4-phosphate (MEP). This is 1-deoxy-D-xylulose 5-phosphate reductoisomerase 2 from Bacillus anthracis.